Here is a 285-residue protein sequence, read N- to C-terminus: 1,4-dihydroxy-2-naphthoyl-CoA synthase (285 aa).

Substrate is bound by residues Arg-45, 84–88 (AGGDQ), Tyr-97, 129–133 (YSIGG), Thr-155, Ser-161, Tyr-258, and Lys-273. Residue 154 to 156 (QTG) participates in hydrogencarbonate binding.

Belongs to the enoyl-CoA hydratase/isomerase family. MenB subfamily. As to quaternary structure, homohexamer. Hydrogencarbonate serves as cofactor.

It catalyses the reaction 2-succinylbenzoyl-CoA + H(+) = 1,4-dihydroxy-2-naphthoyl-CoA + H2O. Its pathway is quinol/quinone metabolism; 1,4-dihydroxy-2-naphthoate biosynthesis; 1,4-dihydroxy-2-naphthoate from chorismate: step 6/7. It functions in the pathway quinol/quinone metabolism; menaquinone biosynthesis. Its function is as follows. Converts o-succinylbenzoyl-CoA (OSB-CoA) to 1,4-dihydroxy-2-naphthoyl-CoA (DHNA-CoA). The polypeptide is 1,4-dihydroxy-2-naphthoyl-CoA synthase (Salmonella typhimurium (strain LT2 / SGSC1412 / ATCC 700720)).